Here is a 218-residue protein sequence, read N- to C-terminus: N-(5'-phosphoribosyl)anthranilate isomerase (218 aa).

It belongs to the TrpF family.

It carries out the reaction N-(5-phospho-beta-D-ribosyl)anthranilate = 1-(2-carboxyphenylamino)-1-deoxy-D-ribulose 5-phosphate. Its pathway is amino-acid biosynthesis; L-tryptophan biosynthesis; L-tryptophan from chorismate: step 3/5. The chain is N-(5'-phosphoribosyl)anthranilate isomerase from Rhodopseudomonas palustris (strain HaA2).